A 119-amino-acid polypeptide reads, in one-letter code: uncharacterized protein (119 aa).

This is an uncharacterized protein from Methanocaldococcus jannaschii (strain ATCC 43067 / DSM 2661 / JAL-1 / JCM 10045 / NBRC 100440) (Methanococcus jannaschii).